Here is a 190-residue protein sequence, read N- to C-terminus: Protein GrpE (190 aa).

Positions 1 to 10 (MKKHVTEEQK) are enriched in basic and acidic residues. Residues 1–42 (MKKHVTEEQKTSAAPEAEQASPESSAAEAATPEERISRLEEQ) form a disordered region. The segment covering 12–30 (SAAPEAEQASPESSAAEAA) has biased composition (low complexity). The segment covering 32–42 (PEERISRLEEQ) has biased composition (basic and acidic residues).

The protein belongs to the GrpE family. Homodimer.

The protein resides in the cytoplasm. Its function is as follows. Participates actively in the response to hyperosmotic and heat shock by preventing the aggregation of stress-denatured proteins, in association with DnaK and GrpE. It is the nucleotide exchange factor for DnaK and may function as a thermosensor. Unfolded proteins bind initially to DnaJ; upon interaction with the DnaJ-bound protein, DnaK hydrolyzes its bound ATP, resulting in the formation of a stable complex. GrpE releases ADP from DnaK; ATP binding to DnaK triggers the release of the substrate protein, thus completing the reaction cycle. Several rounds of ATP-dependent interactions between DnaJ, DnaK and GrpE are required for fully efficient folding. The sequence is that of Protein GrpE from Pelobacter propionicus (strain DSM 2379 / NBRC 103807 / OttBd1).